Here is a 2111-residue protein sequence, read N- to C-terminus: Fatty acid synthase beta subunit aflB (2111 aa).

The acetyltransferase (AT) domain stretch occupies residues 200–565; it reads IVTVFNGQGV…KAGTAARVIL (366 aa). Residues 618–863 are enoyl reductase (ER) domain; the sequence is SRALGLPPVM…AIVDTPGVPD (246 aa). Positions 1195-1688 are dehydratase (DH) domain; that stretch reads GTKPSWRKAL…SPGETLLVDI (494 aa). Residues 1606–1708 enclose the MaoC-like domain; sequence EMPTSSDQYA…IVVATARSES (103 aa). The tract at residues 1727 to 2091 is malonyl/palmitoyl transferase (MT/PT) domain; that stretch reads YLFTGQGSQK…FENVLAISES (365 aa).

The protein belongs to the fungal fatty acid synthetase subunit beta family. [Alpha(6)beta(6)] hexamers of two multifunctional subunits (alpha and beta).

The catalysed reaction is acetyl-CoA + n malonyl-CoA + 2n NADPH + 4n H(+) = a long-chain-acyl-CoA + n CoA + n CO2 + 2n NADP(+).. It catalyses the reaction holo-[ACP] + acetyl-CoA = acetyl-[ACP] + CoA. The enzyme catalyses holo-[ACP] + malonyl-CoA = malonyl-[ACP] + CoA. It carries out the reaction a (3R)-hydroxyacyl-[ACP] = a (2E)-enoyl-[ACP] + H2O. The catalysed reaction is a 2,3-saturated acyl-[ACP] + NAD(+) = a (2E)-enoyl-[ACP] + NADH + H(+). It catalyses the reaction (9Z)-octadecenoyl-[ACP] + H2O = (9Z)-octadecenoate + holo-[ACP] + H(+). It functions in the pathway secondary metabolite biosynthesis. In terms of biological role, fatty acid synthase beta subunit; part of the gene cluster that mediates the biosynthesis of aspercryptins, linear lipopeptides built from six amino acids including 2 highly unusual and nonproteogenic amino acids, 2-amino-octanoic acid (2aoa) and 2-amino-dodecanol (2adol). The core structure of aspercryptins is as follows: Ser/Ala-Thr-Ile/Val-2aoa-Asn-2adol. The first step of aspercryptin biosynthesis is the generation of the fatty acid precursors, octanoic and dodecanoic acids, by the FAS subunits atnF and atnM. The fatty acid precursors are likely transformed into the corresponding alpha-amino fatty acids in three steps. First, they are hydroxylated by the cytochrome P450 monooxygenase atnE, then oxidized to the corresponding alpha-keto acids by the NAD(P)-dependent oxidoreductase atnD, and finally converted to the alpha-amino fatty acids by the PLP-dependent aminotransferases atnH or atnJ. the alpha-amino fatty acids, 2-amino-octanoic and 2-amino-dodecanoic acids, are recognized, activated, and covalently tethered to the NRPS atnA by its fourth and sixth adenylation domains. The second module of atnA is the Thr module and contains an epimerase (E) domain responsible for the epimerization of Thr to D-allo-Thr. Additionally, despite atnA having only one epimerase domain, the first amino acid of aspercryptin A1 is D-Ser, suggesting that serine is either loaded directly as D-Ser on the first module or that the epimerase domain in the threonine module epimerizes both L-Ser and L-Thr. After condensation of the hexapeptide of aspercryptin, the C-terminal reductase (TE) domain might be involved in the reductive release and production of the aldehyde hexapeptide. Further reduction would generate aspercryptins. The variety of aspercryptins produced reflects the flexibility of the atnA NRPS, allowing incorporation of alanine instead of serine, valine for isoleucine, and a C10 fatty amino alcohol instead of the C12 version. AtnB seems to be involved in the selectivity for Ile versus Val by the third module. Moreover, type B, C and D aspercryptins have an additional N-terminal cichorine, acetyl and propionyl group respectively. The chain is Fatty acid synthase beta subunit aflB from Emericella nidulans (strain FGSC A4 / ATCC 38163 / CBS 112.46 / NRRL 194 / M139) (Aspergillus nidulans).